The chain runs to 172 residues: 3-hydroxydecanoyl-[acyl-carrier-protein] dehydratase (172 aa).

H71 is a catalytic residue.

The protein belongs to the thioester dehydratase family. FabA subfamily. In terms of assembly, homodimer.

It is found in the cytoplasm. It catalyses the reaction a (3R)-hydroxyacyl-[ACP] = a (2E)-enoyl-[ACP] + H2O. It carries out the reaction (3R)-hydroxydecanoyl-[ACP] = (2E)-decenoyl-[ACP] + H2O. The catalysed reaction is (2E)-decenoyl-[ACP] = (3Z)-decenoyl-[ACP]. It functions in the pathway lipid metabolism; fatty acid biosynthesis. Functionally, necessary for the introduction of cis unsaturation into fatty acids. Catalyzes the dehydration of (3R)-3-hydroxydecanoyl-ACP to E-(2)-decenoyl-ACP and then its isomerization to Z-(3)-decenoyl-ACP. Can catalyze the dehydratase reaction for beta-hydroxyacyl-ACPs with saturated chain lengths up to 16:0, being most active on intermediate chain length. The protein is 3-hydroxydecanoyl-[acyl-carrier-protein] dehydratase of Pectobacterium atrosepticum (strain SCRI 1043 / ATCC BAA-672) (Erwinia carotovora subsp. atroseptica).